Consider the following 980-residue polypeptide: Protein translocase subunit SecA (980 aa).

Residues glutamine 109, 127–131 (GEGKT), and aspartate 529 contribute to the ATP site. A disordered region spans residues 954–980 (QKIGRNDPCPCGSGKKYKHCHGKDNPQ). Zn(2+) contacts are provided by cysteine 962, cysteine 964, cysteine 973, and histidine 974.

The protein belongs to the SecA family. In terms of assembly, monomer and homodimer. Part of the essential Sec protein translocation apparatus which comprises SecA, SecYEG and auxiliary proteins SecDF. Other proteins may also be involved. The cofactor is Zn(2+).

It is found in the cell inner membrane. The protein resides in the cytoplasm. The catalysed reaction is ATP + H2O + cellular proteinSide 1 = ADP + phosphate + cellular proteinSide 2.. Functionally, part of the Sec protein translocase complex. Interacts with the SecYEG preprotein conducting channel. Has a central role in coupling the hydrolysis of ATP to the transfer of proteins into and across the cell membrane, serving as an ATP-driven molecular motor driving the stepwise translocation of polypeptide chains across the membrane. In Brachyspira hyodysenteriae (strain ATCC 49526 / WA1), this protein is Protein translocase subunit SecA.